The following is a 214-amino-acid chain: Dimethylamine corrinoid protein 2 (214 aa).

In terms of domain architecture, B12-binding N-terminal spans M1–K91. One can recognise a B12-binding domain in the interval L92–L214. Position 105 (H105) interacts with methylcob(III)alamin.

Belongs to the methylamine corrinoid protein family.

It participates in one-carbon metabolism; methanogenesis from dimethylamine. In terms of biological role, acts as a methyl group carrier between MtbB and MtbA. The polypeptide is Dimethylamine corrinoid protein 2 (mtbC2) (Methanosarcina mazei (strain ATCC BAA-159 / DSM 3647 / Goe1 / Go1 / JCM 11833 / OCM 88) (Methanosarcina frisia)).